We begin with the raw amino-acid sequence, 556 residues long: MERKQSNAHSTFADINEVEDEAEQELQQQENNNNKRFSGNRGPNRGKQRPFRGFSRQVSLETGFSVLNRESRERDDKKSLPRSGRSFGGFESGGIINGGDGRKTDFSMFRTKSTLSKQKSLLPSIIRERDIENSLRTEDGETKDDSINENVSAGRYFAALRGPELDEVKDNEDILLPKEEQWPFLLRFPIGCFGICLGLSSQAVLWLALAKSPATNFLHITPLINLVVWLFSLVVLVSVSFTYILKCIFYFEAVKREYFHPVRVNFFFAPWVVCMFLAISVPPMFSPNRKYLHPAIWCVFMGPYFFLELKIYGQWLSGGKRRLCKVANPSSHLSVVGNFVGAILASKVGWDEVAKFLWAVGFAHYLVVFVTLYQRLPTSEALPKELHPVYSMFIAAPSAASIAWNTIYGQFDGCSRTCFFIALFLYISLVARINFFTGFKFSVAWWSYTFPMTTASVATIKYAEAVPGYPSRALALTLSFISTAMVCVLFVSTLLHAFVWQTLFPNDLAIAITKRKLTREKKPFKRAYDLKRWTKQALAKKISAEKDFEAEEESHH.

Positions 1–103 (MERKQSNAHS…GIINGGDGRK (103 aa)) are disordered. Over 1–189 (MERKQSNAHS…EQWPFLLRFP (189 aa)) the chain is Cytoplasmic. Positions 10–36 (STFADINEVEDEAEQELQQQENNNNKR) form a coiled coil. The span at 25-34 (ELQQQENNNN) shows a compositional bias: low complexity. A Phosphoserine; by SRK2E modification is found at Ser59. The span at 69 to 79 (RESRERDDKKS) shows a compositional bias: basic and acidic residues. 3 positions are modified to phosphoserine; by SRK2E: Ser86, Ser113, and Ser120. Residues 86-99 (SFGGFESGGIINGG) are compositionally biased toward gly residues. Ser146 carries the phosphoserine modification. Residues 190–210 (IGCFGICLGLSSQAVLWLALA) traverse the membrane as a helical segment. Over 211–216 (KSPATN) the chain is Extracellular. A helical transmembrane segment spans residues 217-237 (FLHITPLINLVVWLFSLVVLV). Residues 238–265 (SVSFTYILKCIFYFEAVKREYFHPVRVN) lie on the Cytoplasmic side of the membrane. A helical transmembrane segment spans residues 266-286 (FFFAPWVVCMFLAISVPPMFS). Residues 287–295 (PNRKYLHPA) are Extracellular-facing. Residues 296 to 316 (IWCVFMGPYFFLELKIYGQWL) traverse the membrane as a helical segment. Residues 317 to 325 (SGGKRRLCK) lie on the Cytoplasmic side of the membrane. Residues 326–346 (VANPSSHLSVVGNFVGAILAS) form a helical membrane-spanning segment. Topologically, residues 347 to 352 (KVGWDE) are extracellular. Residues 353–373 (VAKFLWAVGFAHYLVVFVTLY) form a helical membrane-spanning segment. Residues 374-388 (QRLPTSEALPKELHP) lie on the Cytoplasmic side of the membrane. Residues 389–409 (VYSMFIAAPSAASIAWNTIYG) traverse the membrane as a helical segment. Residues 410–418 (QFDGCSRTC) lie on the Extracellular side of the membrane. A helical transmembrane segment spans residues 419-439 (FFIALFLYISLVARINFFTGF). A topological domain (cytoplasmic) is located at residue Lys440. A helical transmembrane segment spans residues 441–463 (FSVAWWSYTFPMTTASVATIKYA). The Extracellular segment spans residues 464–479 (EAVPGYPSRALALTLS). The helical transmembrane segment at 480–500 (FISTAMVCVLFVSTLLHAFVW) threads the bilayer. Topologically, residues 501–556 (QTLFPNDLAIAITKRKLTREKKPFKRAYDLKRWTKQALAKKISAEKDFEAEEESHH) are cytoplasmic.

The protein belongs to the SLAC1 S-type anion channel family. In terms of assembly, homotrimer. Interacts with SRK2E, CPK6, CPK21, CPK23 and PP2CA. The channel is inactivated upon PP2CA and ABI1 binding. Interacts with KAT1, KAT2, KAT3/KC1 and AKT2. Interacts with GHR1. Phosphorylation by SRK2E, especially on Ser-120, activates the channel. Also phosphorylated and activated by CPK21 and CPK23. Abscisic acid (ABA) promotes phosphorylation. This phosphorylation is inhibited by ABI1. Phosphorylated and activated by GHR1; this phosphorylation is repressed by ABI2 but not ABI1. Phosphorylated by HT1 on N-terminus but not C-terminus. In terms of tissue distribution, preferentially expressed in guard cells. Also detected in the vascular strands close to the leaf margins.

The protein localises to the cell membrane. Its activity is regulated as follows. Activated by GHR1-mediated phosphorylation which is negatively regulated by ABI2 but not ABI1. Activation by SRK2E/OST1 and GHR1 is repressed by HT1. Its function is as follows. Slow, weak voltage-dependent S-type anion efflux channel involved in maintenance of anion homeostasis. Cl(-) efflux through SLAC1 causes membrane depolarization, which activates outward-rectifying K1 channels, leading to KCl and water efflux to reduce turgor further and cause stomatal closure, that reduces water loss and promotes leaf turgor. Essential for stomatal closure in response to CO(2), abscisic acid (ABA), ozone O(3), light/dark transitions, humidity change, calcium ions, hydrogen peroxide H(2)O(2), reactive oxygen species (ROS), and nitric oxide. Binds to the highly selective inward-rectifying potassium channels KAT1 and AKT2, and inhibits their activities. Functions as an essential negative regulator of inward potassium channels in guard cells. Essential for the efficient stomatal closure and opening in guard cells. Involved in the local and/or systemic stomatal responses (e.g. stomatal closure) to light stress. The sequence is that of Guard cell S-type anion channel SLAC1 from Arabidopsis thaliana (Mouse-ear cress).